Reading from the N-terminus, the 233-residue chain is Phosphatidylserine decarboxylase proenzyme (233 aa).

Catalysis depends on S201, which acts as the Schiff-base intermediate with substrate; via pyruvic acid. S201 is modified (pyruvic acid (Ser); by autocatalysis).

Belongs to the phosphatidylserine decarboxylase family. PSD-A subfamily. As to quaternary structure, heterodimer of a large membrane-associated beta subunit and a small pyruvoyl-containing alpha subunit. The cofactor is pyruvate. Is synthesized initially as an inactive proenzyme. Formation of the active enzyme involves a self-maturation process in which the active site pyruvoyl group is generated from an internal serine residue via an autocatalytic post-translational modification. Two non-identical subunits are generated from the proenzyme in this reaction, and the pyruvate is formed at the N-terminus of the alpha chain, which is derived from the carboxyl end of the proenzyme. The post-translation cleavage follows an unusual pathway, termed non-hydrolytic serinolysis, in which the side chain hydroxyl group of the serine supplies its oxygen atom to form the C-terminus of the beta chain, while the remainder of the serine residue undergoes an oxidative deamination to produce ammonia and the pyruvoyl prosthetic group on the alpha chain.

The protein resides in the cell membrane. The enzyme catalyses a 1,2-diacyl-sn-glycero-3-phospho-L-serine + H(+) = a 1,2-diacyl-sn-glycero-3-phosphoethanolamine + CO2. Its pathway is phospholipid metabolism; phosphatidylethanolamine biosynthesis; phosphatidylethanolamine from CDP-diacylglycerol: step 2/2. Catalyzes the formation of phosphatidylethanolamine (PtdEtn) from phosphatidylserine (PtdSer). This chain is Phosphatidylserine decarboxylase proenzyme, found in Mycolicibacterium vanbaalenii (strain DSM 7251 / JCM 13017 / BCRC 16820 / KCTC 9966 / NRRL B-24157 / PYR-1) (Mycobacterium vanbaalenii).